The sequence spans 132 residues: Small ribosomal subunit protein uS8 (132 aa).

Belongs to the universal ribosomal protein uS8 family. As to quaternary structure, part of the 30S ribosomal subunit. Contacts proteins S5 and S12.

In terms of biological role, one of the primary rRNA binding proteins, it binds directly to 16S rRNA central domain where it helps coordinate assembly of the platform of the 30S subunit. The polypeptide is Small ribosomal subunit protein uS8 (Rhodospirillum rubrum (strain ATCC 11170 / ATH 1.1.1 / DSM 467 / LMG 4362 / NCIMB 8255 / S1)).